An 871-amino-acid chain; its full sequence is Protein argonaute-2 (871 aa).

The PAZ domain maps to 232-351 (PVIEFMCEVL…LPLEVCNIVA (120 aa)). Interaction with guide RNA stretches follow at residues 314–319 (YFKDRH) and 536–578 (GKTP…LCLK). In terms of domain architecture, Piwi spans 529-830 (LVVVILPGKT…VAFRARYHLV (302 aa)). The tract at residues 599-602 (FQQP) is interaction with GW182 family members. An a divalent metal cation-binding site is contributed by aspartate 609. The segment at 662–672 (LIQFYKSTRFK) is interaction with GW182 family members. Position 681 (aspartate 681) interacts with a divalent metal cation. Interaction with guide RNA stretches follow at residues 721–722 (KR), 765–773 (HAGIQGTSR), and 802–824 (YVRC…VAFR). Histidine 819 is a binding site for a divalent metal cation. The tract at residues 834 to 856 (HDSAEGSHTSGQSNGRDQQALAK) is disordered. A compositionally biased stretch (polar residues) spans 839 to 850 (GSHTSGQSNGRD).

This sequence belongs to the argonaute family. Ago subfamily. As to quaternary structure, component of the RISC loading complex (RLC), or micro-RNA (miRNA) loading complex (miRLC), which is composed of dicer1, ago2 and tarbp2. Note that the trimeric RLC/miRLC is also referred to as RISC. Mg(2+) serves as cofactor. The cofactor is Mn(2+).

The protein localises to the cytoplasm. It localises to the P-body. The catalysed reaction is Endonucleolytic cleavage to 5'-phosphomonoester.. In terms of biological role, required for RNA-mediated gene silencing (RNAi) by the RNA-induced silencing complex (RISC). The 'minimal RISC' appears to include ago2 bound to a short guide RNA such as a microRNA (miRNA) or short interfering RNA (siRNA). These guide RNAs direct RISC to complementary mRNAs that are targets for RISC-mediated gene silencing. The precise mechanism of gene silencing depends on the degree of complementarity between the miRNA or siRNA and its target. Binding of RISC to a perfectly complementary mRNA generally results in silencing due to endonucleolytic cleavage of the mRNA specifically by ago2. Binding of RISC to a partially complementary mRNA results in silencing through inhibition of translation, and this is independent of endonuclease activity. The inhibition of translational initiation leads to the accumulation of the affected mRNA in cytoplasmic processing bodies (P-bodies), where mRNA degradation may subsequently occur. In Xenopus tropicalis (Western clawed frog), this protein is Protein argonaute-2 (ago2).